A 434-amino-acid polypeptide reads, in one-letter code: Glutamate-1-semialdehyde 2,1-aminomutase (434 aa).

Lys265 bears the N6-(pyridoxal phosphate)lysine mark.

This sequence belongs to the class-III pyridoxal-phosphate-dependent aminotransferase family. HemL subfamily. Homodimer. Pyridoxal 5'-phosphate is required as a cofactor.

It is found in the cytoplasm. The catalysed reaction is (S)-4-amino-5-oxopentanoate = 5-aminolevulinate. Its pathway is porphyrin-containing compound metabolism; protoporphyrin-IX biosynthesis; 5-aminolevulinate from L-glutamyl-tRNA(Glu): step 2/2. The polypeptide is Glutamate-1-semialdehyde 2,1-aminomutase (Ruminiclostridium cellulolyticum (strain ATCC 35319 / DSM 5812 / JCM 6584 / H10) (Clostridium cellulolyticum)).